Consider the following 147-residue polypeptide: Lysozyme C (147 aa).

Positions 1–18 (MKVLLLLGFIFCSMAAHG) are cleaved as a signal peptide. One can recognise a C-type lysozyme domain in the interval 19 to 147 (KRMERCEFAR…LSKYLEGCHL (129 aa)). 4 disulfides stabilise this stretch: C24-C145, C48-C133, C83-C99, and C95-C113. Active-site residues include E53 and D71.

This sequence belongs to the glycosyl hydrolase 22 family. Monomer.

The protein resides in the secreted. The catalysed reaction is Hydrolysis of (1-&gt;4)-beta-linkages between N-acetylmuramic acid and N-acetyl-D-glucosamine residues in a peptidoglycan and between N-acetyl-D-glucosamine residues in chitodextrins.. Functionally, lysozymes have primarily a bacteriolytic function; those in tissues and body fluids are associated with the monocyte-macrophage system and enhance the activity of immunoagents. The polypeptide is Lysozyme C (LYZ) (Trichosurus vulpecula (Brush-tailed possum)).